The primary structure comprises 588 residues: Beta-(1--&gt;2)glucan export ATP-binding/permease protein NdvA (588 aa).

Residues 21-301 enclose the ABC transmembrane type-1 domain; the sequence is VAVVVIANVI…MRQFVTQIFE (281 aa). A run of 6 helical transmembrane segments spans residues 22-42, 57-77, 136-156, 158-178, 248-268, and 272-292; these read AVVV…PVLF, PILI…VAVA, THLA…AMDL, LSFV…WVMG, TAST…VKNG, and VGDV…LDQM. In terms of domain architecture, ABC transporter spans 335-569; that stretch reads VEFRNINFGF…GGRFTSLLRT (235 aa). 368-375 serves as a coordination point for ATP; sequence GPTGAGKT.

The protein belongs to the ABC transporter superfamily. Beta-(1--&gt;2)glucan exporter (TC 3.A.1.108.1) family. In terms of assembly, homodimer.

It is found in the cell inner membrane. It carries out the reaction [(1-&gt;2)-beta-D-glucosyl](n)(in) + ATP + H2O = [(1-&gt;2)-beta-D-glucosyl](n)(out) + ADP + phosphate + H(+). Functionally, involved in beta-(1--&gt;2)glucan export which is required for crown gall tumor formation. Transmembrane domains (TMD) form a pore in the inner membrane and the ATP-binding domain (NBD) is responsible for energy generation. In Rhizobium radiobacter (Agrobacterium tumefaciens), this protein is Beta-(1--&gt;2)glucan export ATP-binding/permease protein NdvA.